A 126-amino-acid polypeptide reads, in one-letter code: Small ribosomal subunit protein uS13 (126 aa).

Residues 98–126 are disordered; it reads PVRGQSTKNNARTRKGRKKTVANKKKATK. Over residues 108 to 126 the composition is skewed to basic residues; it reads ARTRKGRKKTVANKKKATK.

Belongs to the universal ribosomal protein uS13 family. Part of the 30S ribosomal subunit. Forms a loose heterodimer with protein S19. Forms two bridges to the 50S subunit in the 70S ribosome.

In terms of biological role, located at the top of the head of the 30S subunit, it contacts several helices of the 16S rRNA. In the 70S ribosome it contacts the 23S rRNA (bridge B1a) and protein L5 of the 50S subunit (bridge B1b), connecting the 2 subunits; these bridges are implicated in subunit movement. Contacts the tRNAs in the A and P-sites. This is Small ribosomal subunit protein uS13 from Phocaeicola vulgatus (strain ATCC 8482 / DSM 1447 / JCM 5826 / CCUG 4940 / NBRC 14291 / NCTC 11154) (Bacteroides vulgatus).